A 366-amino-acid polypeptide reads, in one-letter code: Growth hormone secretagogue receptor type 1 (366 aa).

Residues 1–40 (MWNATLSEEPGYNLTLPDLGWDAPADNDSLTDELLPLFPA) are Extracellular-facing. Residues N3, N13, and N27 are each glycosylated (N-linked (GlcNAc...) asparagine). Residues 41-66 (PLLAGVTATCVALFVVGIAGNLLTML) traverse the membrane as a helical segment. Residues 67–72 (VVSRFR) are Cytoplasmic-facing. Residues 73 to 96 (ELRTTTNLYLSSMAFSDLLIFLCM) traverse the membrane as a helical segment. The Extracellular portion of the chain corresponds to 97–117 (PLDLVRLWQYRPWNFGDLLCK). Residues C116 and C198 are joined by a disulfide bond. The helical transmembrane segment at 118–139 (LFQFVSESCTYATVLTITALSV) threads the bilayer. The Cytoplasmic segment spans residues 140–162 (ERYFAICFPLRAKVVVTKGRVKL). The chain crosses the membrane as a helical span at residues 163–183 (VILVIWAVAFCSAGPIFVLVG). Residues 184 to 211 (VEHENGTDPRDTNECRATEFAVRSGLLT) lie on the Extracellular side of the membrane. N-linked (GlcNAc...) asparagine glycosylation is present at N188. The chain crosses the membrane as a helical span at residues 212 to 235 (VMVWVSSVFFFLPVFCLTVLYSLI). The Cytoplasmic portion of the chain corresponds to 236–263 (GRKLWRRKRGEAAVGASLRDQNHKQTVK). A helical membrane pass occupies residues 264–285 (MLAVVVFAFILCWLPFHVGRYL). Residues 286 to 302 (FSKSFEPGSLEIAQISQ) lie on the Extracellular side of the membrane. The chain crosses the membrane as a helical span at residues 303–326 (YCNLVSFVLFYLSAAINPILYNIM). Residues 327 to 366 (SKKYRVAVFKLLGFEPFSQRKLSTLKDESSRAWTETSINT) are Cytoplasmic-facing.

It belongs to the G-protein coupled receptor 1 family.

It is found in the cell membrane. In terms of biological role, receptor for ghrelin, coupled to G-alpha-11 proteins. Stimulates growth hormone secretion. Also binds other growth hormone releasing peptides (GHRP) (e.g. Met-enkephalin and GHRP-6) as well as non-peptide, low molecular weight secretagogues (e.g. L-692,429, MK-0677, adenosine). This Mustela putorius furo (European domestic ferret) protein is Growth hormone secretagogue receptor type 1 (GHSR).